Here is a 314-residue protein sequence, read N- to C-terminus: Serine/threonine-protein phosphatase PP-Y (314 aa).

Residues aspartate 60, histidine 62, aspartate 88, and asparagine 120 each contribute to the Mn(2+) site. The Proton donor role is filled by histidine 121. 2 residues coordinate Mn(2+): histidine 169 and histidine 244.

This sequence belongs to the PPP phosphatase family. PP-Y subfamily. Mn(2+) serves as cofactor.

The enzyme catalyses O-phospho-L-seryl-[protein] + H2O = L-seryl-[protein] + phosphate. It carries out the reaction O-phospho-L-threonyl-[protein] + H2O = L-threonyl-[protein] + phosphate. The protein is Serine/threonine-protein phosphatase PP-Y (PpY-55A) of Drosophila melanogaster (Fruit fly).